The following is a 775-amino-acid chain: Putative ankyrin repeat protein RBE_0801 (775 aa).

6 ANK repeats span residues 66 to 95, 300 to 329, 331 to 356, 357 to 385, 447 to 476, and 523 to 552; these read HSLP…ENTE, ATTV…KVEN, ILQE…IKSF, TNDY…NIVG, IPDV…SFDF, and GDDK…KQGI.

This is Putative ankyrin repeat protein RBE_0801 from Rickettsia bellii (strain RML369-C).